The sequence spans 61 residues: Photosystem II reaction center protein K (61 aa).

Positions M1 to T24 are excised as a propeptide. The helical transmembrane segment at M40–F60 threads the bilayer.

The protein belongs to the PsbK family. PSII is composed of 1 copy each of membrane proteins PsbA, PsbB, PsbC, PsbD, PsbE, PsbF, PsbH, PsbI, PsbJ, PsbK, PsbL, PsbM, PsbT, PsbX, PsbY, PsbZ, Psb30/Ycf12, at least 3 peripheral proteins of the oxygen-evolving complex and a large number of cofactors. It forms dimeric complexes.

The protein localises to the plastid. It is found in the chloroplast thylakoid membrane. Functionally, one of the components of the core complex of photosystem II (PSII). PSII is a light-driven water:plastoquinone oxidoreductase that uses light energy to abstract electrons from H(2)O, generating O(2) and a proton gradient subsequently used for ATP formation. It consists of a core antenna complex that captures photons, and an electron transfer chain that converts photonic excitation into a charge separation. The polypeptide is Photosystem II reaction center protein K (Populus alba (White poplar)).